The primary structure comprises 217 residues: MGVKQTPPVQVKVSDADSTNRRKSSSQEGNPQLVQLKAKSDKDKRKGSSDSTASIMGSSNALPTKNLTTPPALNPLTTSISRGNTAYERSVNGSRITMHSNLAPTETQDVSWSEIDTLDDVKKMAKEPIVNDGFPRDFESNLTQMRKSHAQLLRLMRERNQRLKYAKLRSPPHKDQHNSATNKDQEPDEVLHDPEIALDGEKYVSQVVDTIKDVHRC.

Disordered regions lie at residues 1–85 (MGVK…RGNT) and 167–189 (KLRSPPHKDQHNSATNKDQEPDE). Residues 38–48 (AKSDKDKRKGS) show a composition bias toward basic and acidic residues. Low complexity predominate over residues 60-78 (NALPTKNLTTPPALNPLTT). Residues 172–189 (PHKDQHNSATNKDQEPDE) show a composition bias toward basic and acidic residues.

This is an uncharacterized protein from Saccharomyces cerevisiae (strain ATCC 204508 / S288c) (Baker's yeast).